Here is a 378-residue protein sequence, read N- to C-terminus: Mas-related G-protein coupled receptor MRG (378 aa).

Over 1-77 (MVWGKICWFS…VGQQALPLNI (77 aa)) the chain is Extracellular. N-linked (GlcNAc...) asparagine glycans are attached at residues asparagine 54 and asparagine 57. The helical transmembrane segment at 78–101 (IAPKAVLVSLCGVLLNGTVFWLLC) threads the bilayer. Topologically, residues 102 to 109 (CGATNPYM) are cytoplasmic. Residues 110–136 (VYILHLVAADVIYLCCSAVGFLQVTLL) traverse the membrane as a helical segment. At 137-154 (TYHGVVFFIPDFLAILSP) the chain is on the extracellular side. The helical transmembrane segment at 155–169 (FSFEVCLCLLVAIST) threads the bilayer. Residues 170–191 (ERCVCVLFPIWYRCHRPKYTSN) are Cytoplasmic-facing. Residues 192 to 207 (VVCTLIWGLPFCINIV) traverse the membrane as a helical segment. The Extracellular segment spans residues 208-221 (KSLFLTYWKHVKAC). Residues 222–248 (VIFLKLSGLFHAILSLVMCVSSLTLLI) traverse the membrane as a helical segment. The Cytoplasmic segment spans residues 249–264 (RFLCCSQQQKATRVYA). A helical transmembrane segment spans residues 265–286 (VVQISAPMFLLWALPLSVAPLI). Residues 287–297 (TDFKMFVTTSY) lie on the Extracellular side of the membrane. A helical membrane pass occupies residues 298–317 (LISLFLIINSSANPIIYFFV). Residues 318 to 378 (GSLRKKRLKE…PREHRVDVET (61 aa)) lie on the Cytoplasmic side of the membrane. Positions 344-378 (GRNKKAAGIDPMEQPHSTQHVENLLPREHRVDVET) are disordered. Over residues 368 to 378 (LPREHRVDVET) the composition is skewed to basic and acidic residues.

It belongs to the G-protein coupled receptor 1 family. Mas subfamily.

It is found in the cell membrane. This chain is Mas-related G-protein coupled receptor MRG (MAS1L), found in Homo sapiens (Human).